The following is an 876-amino-acid chain: Xylosyltransferase oxt (876 aa).

The Cytoplasmic segment spans residues 1-14; it reads MEQSVSARWLKRYR. Residues 15-35 traverse the membrane as a helical; Signal-anchor for type II membrane protein segment; it reads AFFLILLLIVAIQLFLAYKSL. The Lumenal portion of the chain corresponds to 36-876; the sequence is DIVGGGSGSG…PKSDVDALLK (841 aa). Residues 48–67 are disordered; the sequence is AAEAPASPPPPHAQARVQPP. Intrachain disulfides connect C83-C111, C127-C465, C484-C497, and C486-C495. N131 and N135 each carry an N-linked (GlcNAc...) asparagine glycan. Residues 134-228 enclose the WSC domain; it reads ANVSLGCFKD…FYAMNIYETG (95 aa). Residues D283 and 312-314 contribute to the UDP-alpha-D-xylose site; that span reads TIW. A glycan (N-linked (GlcNAc...) asparagine) is linked at N342. Position 415 to 416 (415 to 416) interacts with UDP-alpha-D-xylose; it reads DW. Residues S498 and 522 to 523 each bind UDP-alpha-D-xylose; that span reads RK. N-linked (GlcNAc...) asparagine glycosylation is found at N696 and N725. C842 and C855 are joined by a disulfide.

This sequence belongs to the glycosyltransferase 14 family. XylT subfamily. Ca(2+) serves as cofactor. It depends on Mn(2+) as a cofactor. Requires Mg(2+) as cofactor.

It localises to the endoplasmic reticulum membrane. It is found in the golgi apparatus membrane. It carries out the reaction UDP-alpha-D-xylose + L-seryl-[protein] = 3-O-(beta-D-xylosyl)-L-seryl-[protein] + UDP + H(+). Its pathway is glycan metabolism; chondroitin sulfate biosynthesis. It functions in the pathway glycan metabolism; heparan sulfate biosynthesis. Catalyzes the first step in biosynthesis of glycosaminoglycan. Transfers D-xylose from UDP-D-xylose to specific serine residues of the core protein. This is Xylosyltransferase oxt from Drosophila melanogaster (Fruit fly).